Consider the following 324-residue polypeptide: Short-chain dehydrogenase/reductase iacJ (324 aa).

Positions 42, 66, 93, 120, 204, 208, and 239 each coordinate NADP(+). The active-site Proton donor is the Tyr204. The active-site Lowers pKa of active site Tyr is the Lys208.

It belongs to the short-chain dehydrogenases/reductases (SDR) family.

Its pathway is secondary metabolite biosynthesis. Its function is as follows. Short-chain dehydrogenase/reductase; part of the gene cluster that mediates the biosynthesis of iso-A82775C, a enylepoxycyclohexane and biosynthetic precursor of the chloropestolide anticancer natural products. Within the cluster, the prenyltransferase iacE prenylates siccayne to generate pestalodiol E, using dimethylallyl diphosphate (DMAPP) as cosubstrate. The probable oxidoreductase iacF is then involved in the epoxidation of pestalodiol F to pestalodiol F, which is further converted to pestalofone A by the short-chain dehydrogenase/reductase iacG. Iso-A82775C is subsequently generated from pestalofone A by the short-chain dehydrogenase/reductase iacC. Iso-A82775C is further condensed with maldoxin via a Diels-Alder reaction to produce the anticancer natural products chloropestolides A to E. The chain is Short-chain dehydrogenase/reductase iacJ from Pestalotiopsis fici (strain W106-1 / CGMCC3.15140).